A 126-amino-acid polypeptide reads, in one-letter code: MARLLLVCLGGALGSGARYLTSAWALRAFGPDFPRGTLLVNVSGSFLLAGIMTASLQSEAVPPDLRLFLAAGVMGGFTTYSSFNYETLALVEQGRLAAAAAYLLATVLGCLAAAFAATLLVRWLAG.

Transmembrane regions (helical) follow at residues 4–24 (LLLVCLGGALGSGARYLTSAW), 36–56 (GTLLVNVSGSFLLAGIMTASL), 67–85 (LFLAAGVMGGFTTYSSFNY), and 101–121 (AYLLATVLGCLAAAFAATLLV). Residues Gly75 and Thr78 each coordinate Na(+).

It belongs to the fluoride channel Fluc/FEX (TC 1.A.43) family.

The protein resides in the cell inner membrane. The enzyme catalyses fluoride(in) = fluoride(out). Na(+) is not transported, but it plays an essential structural role and its presence is essential for fluoride channel function. Its function is as follows. Fluoride-specific ion channel. Important for reducing fluoride concentration in the cell, thus reducing its toxicity. This is Fluoride-specific ion channel FluC from Anaeromyxobacter dehalogenans (strain 2CP-1 / ATCC BAA-258).